The following is a 153-amino-acid chain: CASP-like protein 5B1 (153 aa).

Residues 1–20 (MRELAGSPGTWSGLSLRVGQ) are Cytoplasmic-facing. A helical membrane pass occupies residues 21–41 (LVFAAASVCATASALGFAAYT). A topological domain (extracellular) is located at residue A42. Residues 43–63 (FCYLIASMGLQALWSLGLACL) traverse the membrane as a helical segment. Topologically, residues 64–76 (DCYALKFKKDLHS) are cytoplasmic. The helical transmembrane segment at 77 to 97 (AVLLSLFVVGDWVTAILSFAA) threads the bilayer. The Extracellular segment spans residues 98–128 (SCSAAGVVVLFDRDIYACRNPQLPCGRFELA). The helical transmembrane segment at 129–149 (IACAFLSWAFSATSALVMFWL) threads the bilayer. Residues 150–153 (LASL) are Cytoplasmic-facing.

The protein belongs to the Casparian strip membrane proteins (CASP) family. In terms of assembly, homodimer and heterodimers.

It is found in the cell membrane. The polypeptide is CASP-like protein 5B1 (Oryza sativa subsp. indica (Rice)).